The sequence spans 232 residues: MEYVVVIPAAGQGKRMKAGKNKLFISLKGAPVIIHTLRVFESHAPCQKIILVINESEREDFRQLLAQFPIQTEIELVTGGAERQHSVYEGLKMIDKESVVLVHDGARPFVTHQHIDKLVETAEEAGAAVLAVPVKDTIKRAEGSRVAETFDRSSLWAVQTPQAFRLSLLKTAHMEAENKGFLGTDDASLVERLDGYQVSIVEGSYTNIKLTTPDDLIFAEAIMKAESGNHNV.

Belongs to the IspD/TarI cytidylyltransferase family. IspD subfamily.

It catalyses the reaction 2-C-methyl-D-erythritol 4-phosphate + CTP + H(+) = 4-CDP-2-C-methyl-D-erythritol + diphosphate. It participates in isoprenoid biosynthesis; isopentenyl diphosphate biosynthesis via DXP pathway; isopentenyl diphosphate from 1-deoxy-D-xylulose 5-phosphate: step 2/6. Its function is as follows. Catalyzes the formation of 4-diphosphocytidyl-2-C-methyl-D-erythritol from CTP and 2-C-methyl-D-erythritol 4-phosphate (MEP). This Bacillus velezensis (strain DSM 23117 / BGSC 10A6 / LMG 26770 / FZB42) (Bacillus amyloliquefaciens subsp. plantarum) protein is 2-C-methyl-D-erythritol 4-phosphate cytidylyltransferase.